We begin with the raw amino-acid sequence, 397 residues long: Tryptophan synthase beta chain (397 aa).

The residue at position 88 (lysine 88) is an N6-(pyridoxal phosphate)lysine.

This sequence belongs to the TrpB family. In terms of assembly, tetramer of two alpha and two beta chains. Requires pyridoxal 5'-phosphate as cofactor.

It catalyses the reaction (1S,2R)-1-C-(indol-3-yl)glycerol 3-phosphate + L-serine = D-glyceraldehyde 3-phosphate + L-tryptophan + H2O. Its pathway is amino-acid biosynthesis; L-tryptophan biosynthesis; L-tryptophan from chorismate: step 5/5. The beta subunit is responsible for the synthesis of L-tryptophan from indole and L-serine. In Haemophilus influenzae (strain ATCC 51907 / DSM 11121 / KW20 / Rd), this protein is Tryptophan synthase beta chain (trpB).